The sequence spans 86 residues: Cell division topological specificity factor (86 aa).

It belongs to the MinE family.

In terms of biological role, prevents the cell division inhibition by proteins MinC and MinD at internal division sites while permitting inhibition at polar sites. This ensures cell division at the proper site by restricting the formation of a division septum at the midpoint of the long axis of the cell. This Aliivibrio salmonicida (strain LFI1238) (Vibrio salmonicida (strain LFI1238)) protein is Cell division topological specificity factor.